We begin with the raw amino-acid sequence, 341 residues long: tRNA N6-adenosine threonylcarbamoyltransferase (341 aa).

2 residues coordinate Fe cation: H114 and H118. Residues 136 to 140 (LVSGG), D169, G182, D186, and N278 each bind substrate. D304 contacts Fe cation.

It belongs to the KAE1 / TsaD family. It depends on Fe(2+) as a cofactor.

It localises to the cytoplasm. It catalyses the reaction L-threonylcarbamoyladenylate + adenosine(37) in tRNA = N(6)-L-threonylcarbamoyladenosine(37) in tRNA + AMP + H(+). Functionally, required for the formation of a threonylcarbamoyl group on adenosine at position 37 (t(6)A37) in tRNAs that read codons beginning with adenine. Is involved in the transfer of the threonylcarbamoyl moiety of threonylcarbamoyl-AMP (TC-AMP) to the N6 group of A37, together with TsaE and TsaB. TsaD likely plays a direct catalytic role in this reaction. This is tRNA N6-adenosine threonylcarbamoyltransferase from Lactococcus lactis subsp. cremoris (strain MG1363).